The chain runs to 391 residues: Homoserine O-acetyltransferase (391 aa).

The 311-residue stretch at 50 to 360 (NAILICHALT…DKGHDAFLLD (311 aa)) folds into the AB hydrolase-1 domain. The active-site Nucleophile is the Ser-155. Arg-225 contacts substrate. Active-site residues include Asp-321 and His-354. Asp-355 is a substrate binding site.

Belongs to the AB hydrolase superfamily. MetX family. As to quaternary structure, homodimer.

The protein localises to the cytoplasm. The enzyme catalyses L-homoserine + acetyl-CoA = O-acetyl-L-homoserine + CoA. The protein operates within amino-acid biosynthesis; L-methionine biosynthesis via de novo pathway; O-acetyl-L-homoserine from L-homoserine: step 1/1. Functionally, transfers an acetyl group from acetyl-CoA to L-homoserine, forming acetyl-L-homoserine. This Rhodospirillum rubrum (strain ATCC 11170 / ATH 1.1.1 / DSM 467 / LMG 4362 / NCIMB 8255 / S1) protein is Homoserine O-acetyltransferase.